A 497-amino-acid polypeptide reads, in one-letter code: Arabinose import ATP-binding protein AraG (497 aa).

ABC transporter domains are found at residues 6 to 242 and 250 to 497; these read LRFD…MVGR and FRPR…ALPA. 38–45 is a binding site for ATP; sequence GENGAGKS.

This sequence belongs to the ABC transporter superfamily. Arabinose importer (TC 3.A.1.2.2) family. The complex is composed of two ATP-binding proteins (AraG), two transmembrane proteins (AraH) and a solute-binding protein (AraF).

Its subcellular location is the cell inner membrane. The catalysed reaction is L-arabinose(out) + ATP + H2O = L-arabinose(in) + ADP + phosphate + H(+). In terms of biological role, part of the ABC transporter complex AraFGH involved in arabinose import. Responsible for energy coupling to the transport system. The sequence is that of Arabinose import ATP-binding protein AraG from Chromohalobacter salexigens (strain ATCC BAA-138 / DSM 3043 / CIP 106854 / NCIMB 13768 / 1H11).